The sequence spans 218 residues: Probable GTP-binding protein EngB (218 aa).

Residues Ser-31 to Gln-205 enclose the EngB-type G domain. Residues Gly-39 to Ser-46, Gly-66 to Leu-70, Asp-84 to Gly-87, Thr-151 to Asp-154, and Phe-184 to Ser-186 contribute to the GTP site. 2 residues coordinate Mg(2+): Ser-46 and Thr-68.

The protein belongs to the TRAFAC class TrmE-Era-EngA-EngB-Septin-like GTPase superfamily. EngB GTPase family. The cofactor is Mg(2+).

Functionally, necessary for normal cell division and for the maintenance of normal septation. In Psychromonas ingrahamii (strain DSM 17664 / CCUG 51855 / 37), this protein is Probable GTP-binding protein EngB.